Consider the following 197-residue polypeptide: Imidazoleglycerol-phosphate dehydratase (197 aa).

Belongs to the imidazoleglycerol-phosphate dehydratase family.

It localises to the cytoplasm. The enzyme catalyses D-erythro-1-(imidazol-4-yl)glycerol 3-phosphate = 3-(imidazol-4-yl)-2-oxopropyl phosphate + H2O. Its pathway is amino-acid biosynthesis; L-histidine biosynthesis; L-histidine from 5-phospho-alpha-D-ribose 1-diphosphate: step 6/9. In Chromohalobacter salexigens (strain ATCC BAA-138 / DSM 3043 / CIP 106854 / NCIMB 13768 / 1H11), this protein is Imidazoleglycerol-phosphate dehydratase.